Consider the following 639-residue polypeptide: DNA gyrase subunit B (639 aa).

Residues 392–402 show a composition bias toward basic and acidic residues; it reads QAEELTRRKSA. The tract at residues 392–417 is disordered; sequence QAEELTRRKSALESTSLPGKLADCQS. The Toprim domain occupies 423–537; that stretch reads SELFIVEGDS…AGYVYAAQPP (115 aa). Residues Glu-429, Asp-502, and Asp-504 each coordinate Mg(2+).

The protein belongs to the type II topoisomerase GyrB family. In terms of assembly, heterotetramer, composed of two GyrA and two GyrB chains. In the heterotetramer, GyrA contains the active site tyrosine that forms a transient covalent intermediate with DNA, while GyrB binds cofactors and catalyzes ATP hydrolysis. The cofactor is Mg(2+). Mn(2+) serves as cofactor. Requires Ca(2+) as cofactor.

The protein resides in the cytoplasm. The enzyme catalyses ATP-dependent breakage, passage and rejoining of double-stranded DNA.. A type II topoisomerase that negatively supercoils closed circular double-stranded (ds) DNA in an ATP-dependent manner to modulate DNA topology and maintain chromosomes in an underwound state. Negative supercoiling favors strand separation, and DNA replication, transcription, recombination and repair, all of which involve strand separation. Also able to catalyze the interconversion of other topological isomers of dsDNA rings, including catenanes and knotted rings. Type II topoisomerases break and join 2 DNA strands simultaneously in an ATP-dependent manner. This is DNA gyrase subunit B from Haloferax lucentense (strain DSM 14919 / JCM 9276 / NCIMB 13854 / Aa 2.2) (Haloferax alicantei).